The chain runs to 509 residues: Heat shock 70 kDa protein 14-A (509 aa).

The protein belongs to the heat shock protein 70 family. As to quaternary structure, component of ribosome-associated complex (RAC).

It localises to the cytoplasm. It is found in the cytosol. Functionally, component of the ribosome-associated complex (RAC), a complex involved in folding or maintaining nascent polypeptides in a folding-competent state. In Xenopus laevis (African clawed frog), this protein is Heat shock 70 kDa protein 14-A (hspa14-a).